The sequence spans 361 residues: tRNA/tmRNA (uracil-C(5))-methyltransferase (361 aa).

Gln183, Tyr211, Asn216, Glu232, and Asp294 together coordinate S-adenosyl-L-methionine. Residue Cys319 is the Nucleophile of the active site. The active-site Proton acceptor is the Glu353.

It belongs to the class I-like SAM-binding methyltransferase superfamily. RNA M5U methyltransferase family. TrmA subfamily.

The enzyme catalyses uridine(54) in tRNA + S-adenosyl-L-methionine = 5-methyluridine(54) in tRNA + S-adenosyl-L-homocysteine + H(+). The catalysed reaction is uridine(341) in tmRNA + S-adenosyl-L-methionine = 5-methyluridine(341) in tmRNA + S-adenosyl-L-homocysteine + H(+). Dual-specificity methyltransferase that catalyzes the formation of 5-methyluridine at position 54 (m5U54) in all tRNAs, and that of position 341 (m5U341) in tmRNA (transfer-mRNA). The sequence is that of tRNA/tmRNA (uracil-C(5))-methyltransferase from Acinetobacter baylyi (strain ATCC 33305 / BD413 / ADP1).